Reading from the N-terminus, the 688-residue chain is Lectin-domain containing receptor kinase VI.3 (688 aa).

The N-terminal stretch at 1–14 is a signal peptide; that stretch reads MLVLFLLLTIPTRA. The Extracellular segment spans residues 15–306; sequence QRTTTETPKT…KRGYNSQVLA (292 aa). A legume-lectin like region spans residues 22-271; that stretch reads PKTEFIFRGF…AHYVMGWSFS (250 aa). Residues 307–327 traverse the membrane as a helical segment; that stretch reads LIVALSGVTVILLALLFFFVM. At 328 to 688 the chain is on the cytoplasmic side; sequence YKKRLQQGEV…VSSSSVISGR (361 aa). The 280-residue stretch at 361 to 640 folds into the Protein kinase domain; it reads FKENRIVGTG…LNGDDDVPEI (280 aa). ATP contacts are provided by residues 367-375 and Lys391; that span reads VGTGGFGTV. Asp490 acts as the Proton acceptor in catalysis. The disordered stretch occupies residues 662 to 688; it reads VSSDRASSSVPSFSVTRVSSSSVISGR.

In the C-terminal section; belongs to the protein kinase superfamily. Ser/Thr protein kinase family. This sequence in the N-terminal section; belongs to the leguminous lectin family.

It localises to the cell membrane. The enzyme catalyses L-seryl-[protein] + ATP = O-phospho-L-seryl-[protein] + ADP + H(+). The catalysed reaction is L-threonyl-[protein] + ATP = O-phospho-L-threonyl-[protein] + ADP + H(+). Involved in negative regulation of abscisic acid response in seed germination. The chain is Lectin-domain containing receptor kinase VI.3 (LECRK63) from Arabidopsis thaliana (Mouse-ear cress).